Reading from the N-terminus, the 201-residue chain is UPF0301 protein R00917 (201 aa).

It belongs to the UPF0301 (AlgH) family.

The chain is UPF0301 protein R00917 from Rhizobium meliloti (strain 1021) (Ensifer meliloti).